The chain runs to 536 residues: Probable serine/threonine-protein kinase DDB_G0268550 (536 aa).

The Protein kinase domain occupies 14 to 305 (EIIEKNYRKG…IDVLEIHPFL (292 aa)). ATP is bound by residues 20–28 (YRKGGFSKI) and K51. D147 acts as the Proton acceptor in catalysis. The disordered stretch occupies residues 161–192 (DNNNNNNNNNNNNNNNNNNNSNINDDNNNSNS).

This sequence belongs to the protein kinase superfamily. Ser/Thr protein kinase family. Requires Mg(2+) as cofactor.

It carries out the reaction L-seryl-[protein] + ATP = O-phospho-L-seryl-[protein] + ADP + H(+). The catalysed reaction is L-threonyl-[protein] + ATP = O-phospho-L-threonyl-[protein] + ADP + H(+). In Dictyostelium discoideum (Social amoeba), this protein is Probable serine/threonine-protein kinase DDB_G0268550.